Here is a 306-residue protein sequence, read N- to C-terminus: Pantothenate kinase (306 aa).

90-97 contacts ATP; that stretch reads GSVAVGKS.

This sequence belongs to the prokaryotic pantothenate kinase family.

Its subcellular location is the cytoplasm. The enzyme catalyses (R)-pantothenate + ATP = (R)-4'-phosphopantothenate + ADP + H(+). It functions in the pathway cofactor biosynthesis; coenzyme A biosynthesis; CoA from (R)-pantothenate: step 1/5. The protein is Pantothenate kinase of Listeria monocytogenes serotype 4b (strain CLIP80459).